Reading from the N-terminus, the 512-residue chain is Keratin, type I cytoskeletal 24 (512 aa).

Residues 1–21 form a disordered region; that stretch reads MFCSAQKGSCSSRVSSSGAVG. The interval 1-140 is head; it reads MFCSAQKGSC…GYDGGLLSGS (140 aa). Low complexity predominate over residues 8-21; that stretch reads GSCSSRVSSSGAVG. The segment at 141 to 176 is coil 1A; that stretch reads EKQTMQDLNDRLANYLDKVRALEEANTDLECKIKDW. The 315-residue stretch at 141-455 folds into the IF rod domain; it reads EKQTMQDLND…RLLNGDGGGC (315 aa). Positions 177 to 197 are linker 1; that stretch reads YGKHGSVKGGSGRDYSQYYSI. The segment at 198-289 is coil 1B; that stretch reads IEDLKKQILS…KNHEEEMKCM (92 aa). The segment at 290–312 is linker 12; sequence QGSSGGDVTVEMNAAPGVDLTKL. Positions 313 to 451 are coil 2; it reads LNDMRAQYEA…ETYRRLLNGD (139 aa). The tract at residues 452 to 512 is tail; the sequence is GGGCDYRNLV…VSNISEVKIK (61 aa).

It belongs to the intermediate filament family. In terms of assembly, heterotetramer of two type I and two type II keratins.

The protein is Keratin, type I cytoskeletal 24 (Krt24) of Mus musculus (Mouse).